The following is a 256-amino-acid chain: NH(3)-dependent NAD(+) synthetase (256 aa).

ATP is bound at residue 29–36; the sequence is GISGGIDS. Asp-35 serves as a coordination point for Mg(2+). Residue Arg-115 participates in deamido-NAD(+) binding. ATP is bound at residue Thr-135. Glu-140 provides a ligand contact to Mg(2+). Deamido-NAD(+)-binding residues include Lys-148 and Asp-155. Residues Lys-164 and Ser-186 each contribute to the ATP site. 245-246 lines the deamido-NAD(+) pocket; that stretch reads HK.

It belongs to the NAD synthetase family. As to quaternary structure, homodimer.

It carries out the reaction deamido-NAD(+) + NH4(+) + ATP = AMP + diphosphate + NAD(+) + H(+). Its pathway is cofactor biosynthesis; NAD(+) biosynthesis; NAD(+) from deamido-NAD(+) (ammonia route): step 1/1. In terms of biological role, catalyzes the ATP-dependent amidation of deamido-NAD to form NAD. Uses ammonia as a nitrogen source. The protein is NH(3)-dependent NAD(+) synthetase of Methanosarcina mazei (strain ATCC BAA-159 / DSM 3647 / Goe1 / Go1 / JCM 11833 / OCM 88) (Methanosarcina frisia).